We begin with the raw amino-acid sequence, 565 residues long: NAD-dependent malic enzyme (565 aa).

The Proton donor role is filled by tyrosine 104. Arginine 157 serves as a coordination point for NAD(+). Lysine 175 functions as the Proton acceptor in the catalytic mechanism. Residues glutamate 246, aspartate 247, and aspartate 270 each coordinate a divalent metal cation. The NAD(+) site is built by aspartate 270 and asparagine 418.

Belongs to the malic enzymes family. As to quaternary structure, homotetramer. The cofactor is Mg(2+). Requires Mn(2+) as cofactor.

The catalysed reaction is (S)-malate + NAD(+) = pyruvate + CO2 + NADH. The enzyme catalyses oxaloacetate + H(+) = pyruvate + CO2. This is NAD-dependent malic enzyme from Escherichia coli (strain K12 / MC4100 / BW2952).